We begin with the raw amino-acid sequence, 1210 residues long: Epidermal growth factor receptor (1210 aa).

An N-terminal signal peptide occupies residues 1 to 24; that stretch reads MRPSGTAGAALLALLAALCPASRA. The Extracellular portion of the chain corresponds to 25–645; that stretch reads LEEKKVCQGT…CPTNGPKIPS (621 aa). A disulfide bridge connects residues Cys31 and Cys58. N-linked (GlcNAc...) (complex) asparagine; atypical; partial glycosylation is present at Asn56. Asn73 carries N-linked (GlcNAc...) asparagine; atypical glycosylation. The Approximate repeat unit spans residues 75 to 300; sequence DLSFLKTIQE…CVKKCPRNYV (226 aa). Residues Asn128, Asn175, and Asn196 are each glycosylated (N-linked (GlcNAc...) asparagine). 13 cysteine pairs are disulfide-bonded: Cys157-Cys187, Cys190-Cys199, Cys194-Cys207, Cys215-Cys223, Cys219-Cys231, Cys232-Cys240, Cys236-Cys248, Cys251-Cys260, Cys264-Cys291, Cys295-Cys307, Cys311-Cys326, Cys329-Cys333, and Cys337-Cys362. Ser229 bears the Phosphoserine mark. Residues Asn352, Asn361, Asn413, and Asn444 are each glycosylated (N-linked (GlcNAc...) asparagine). One copy of the Approximate repeat lies at 390–600; sequence QELDILKTVK…CVKTCPAGVM (211 aa). 11 cysteine pairs are disulfide-bonded: Cys470–Cys499, Cys506–Cys515, Cys510–Cys523, Cys526–Cys535, Cys539–Cys555, Cys558–Cys571, Cys562–Cys579, Cys582–Cys591, Cys595–Cys617, Cys620–Cys628, and Cys624–Cys636. Asn528 carries N-linked (GlcNAc...) asparagine glycosylation. N-linked (GlcNAc...) asparagine; partial glycosylation occurs at Asn568. Residue Asn603 is glycosylated (N-linked (GlcNAc...) asparagine; partial). The N-linked (GlcNAc...) (high mannose) asparagine glycan is linked to Asn623. The helical transmembrane segment at 646–668 threads the bilayer; the sequence is IATGMVGALLLLLVVALGIGLFM. Topologically, residues 669–1210 are cytoplasmic; that stretch reads RRRHIVRKRT…APQSSEFIGA (542 aa). Thr678 is modified (phosphothreonine; by PKC and PKD/PRKD1). The important for dimerization, phosphorylation and activation stretch occupies residues 688 to 704; that stretch reads LVEPLTPSGEAPNQALL. Position 693 is a phosphothreonine; by PKD/PRKD1 (Thr693). Residue Ser695 is modified to Phosphoserine. Residues 712-979 enclose the Protein kinase domain; that stretch reads FKKIKVLGSG…KMARDPQRYL (268 aa). A Glycyl lysine isopeptide (Lys-Gly) (interchain with G-Cter in ubiquitin) cross-link involves residue Lys716. 718 to 726 provides a ligand contact to ATP; that stretch reads LGSGAFGTV. Lys737 participates in a covalent cross-link: Glycyl lysine isopeptide (Lys-Gly) (interchain with G-Cter in ubiquitin). Residue Lys745 participates in ATP binding. N6-(2-hydroxyisobutyryl)lysine is present on Lys745. Residues Lys754 and Lys757 each participate in a glycyl lysine isopeptide (Lys-Gly) (interchain with G-Cter in ubiquitin) cross-link. Residue 790–791 coordinates ATP; that stretch reads TQ. Asp837 (proton acceptor) is an active-site residue. Asp855 is a binding site for ATP. Lys867 participates in a covalent cross-link: Glycyl lysine isopeptide (Lys-Gly) (interchain with G-Cter in ubiquitin). The residue at position 869 (Tyr869) is a Phosphotyrosine. Residues Lys929, Lys960, and Lys970 each participate in a glycyl lysine isopeptide (Lys-Gly) (interchain with G-Cter in ubiquitin) cross-link. Phosphoserine is present on residues Ser991 and Ser995. 2 positions are modified to phosphotyrosine; by autocatalysis: Tyr998 and Tyr1016. Phosphoserine occurs at positions 1026 and 1039. At Thr1041 the chain carries Phosphothreonine. A Phosphoserine modification is found at Ser1042. Cys1049 is lipidated: S-palmitoyl cysteine. A Phosphoserine modification is found at Ser1064. Tyr1069 is subject to Phosphotyrosine. Phosphoserine is present on residues Ser1070, Ser1071, and Ser1081. Phosphotyrosine; by autocatalysis is present on residues Tyr1092 and Tyr1110. The interval 1097–1137 is disordered; that stretch reads VPKRPAGSVQNPVYHNQPLNPAPSRDPHYQDPHSTAVGNPE. Composition is skewed to polar residues over residues 1104–1115 and 1128–1137; these read SVQNPVYHNQPL and PHSTAVGNPE. The S-palmitoyl cysteine moiety is linked to residue Cys1146. Ser1166 is modified (phosphoserine). Residues Tyr1172 and Tyr1197 each carry the phosphotyrosine; by autocatalysis modification. Arg1199 bears the Omega-N-methylarginine mark.

Belongs to the protein kinase superfamily. Tyr protein kinase family. EGF receptor subfamily. As to quaternary structure, binding of the ligand triggers homo- and/or heterodimerization of the receptor triggering its autophosphorylation. Heterodimer with ERBB2. Forms a complex with CCDC88A/GIV (via SH2-like regions) and GNAI3 which leads to enhanced EGFR signaling and triggering of cell migration; binding to CCDC88A requires autophosphorylation of the EGFR C-terminal region, and ligand stimulation is required for recruitment of GNAI3 to the complex. Interacts with ERRFI1; inhibits dimerization of the kinase domain and autophosphorylation. Part of a complex with ERBB2 and either PIK3C2A or PIK3C2B. Interacts with GRB2; an adapter protein coupling the receptor to downstream signaling pathways. Interacts with GAB2; involved in signaling downstream of EGFR. Interacts with STAT3; mediates EGFR downstream signaling in cell proliferation. Interacts with RIPK1; involved in NF-kappa-B activation. Interacts (autophosphorylated) with CBL, CBLB and CBLC; involved in EGFR ubiquitination and regulation; interaction with CBL is reduced in the presence of tensin TNS4. Interacts with SOCS5; regulates EGFR degradation through ELOC- and ELOB-mediated ubiquitination and proteasomal degradation. Interacts with PRMT5; methylates EGFR and enhances interaction with PTPN6. Interacts (phosphorylated) with PTPN6; inhibits EGFR-dependent activation of MAPK/ERK. Interacts with COPG1; essential for regulation of EGF-dependent nuclear transport of EGFR by retrograde trafficking from the Golgi to the ER. Interacts with TNK2; this interaction is dependent on EGF stimulation and kinase activity of EGFR. Interacts with PCNA; positively regulates PCNA. Interacts with PELP1. Interacts with MUC1. Interacts with AP2M1. Interacts with FER. May interact with EPS8; mediates EPS8 phosphorylation. Interacts (via SH2 domains) with GRB2, NCK1 and NCK2. Interacts with ATXN2. Interacts with GAREM1. Interacts (ubiquitinated) with ANKRD13A/B/D; the interaction is direct and may regulate EGFR internalization after EGF stimulation. Interacts with GPER1; the interaction occurs in an estrogen-dependent manner. Interacts (via C-terminal cytoplasmic kinase domain) with ZPR1 (via zinc fingers). Interacts with RNF115 and RNF126. Interacts with GPRC5A (via its transmembrane domain). Interacts with FAM83B; positively regulates EGFR inducing its autophosphorylation in absence of stimulation by EGF. Interacts with LAPTM4B; positively correlates with EGFR activation. Interacts with STX19. Interacts with CD44. Interacts with PGRMC1; the interaction requires PGRMC1 homodimerization. Interacts with PIKFYVE. Interacts with NEU3. Interacts with TRAF4. Interacts with the ant venom OMEGA-myrmeciitoxin(02)-Mg1a. Interacts with CD82; this interaction facilitates ligand-induced endocytosis of the receptor and its subsequent desensitization. In terms of processing, phosphorylated on Tyr residues in response to EGF. Phosphorylation at Ser-695 is partial and occurs only if Thr-693 is phosphorylated. Phosphorylation at Thr-678 and Thr-693 by PRKD1 inhibits EGF-induced MAPK8/JNK1 activation. Dephosphorylation by PTPRJ prevents endocytosis and stabilizes the receptor at the plasma membrane. Autophosphorylation at Tyr-1197 is stimulated by methylation at Arg-1199 and enhances interaction with PTPN6. Autophosphorylation at Tyr-1092 and/or Tyr-1110 recruits STAT3. Dephosphorylated by PTPN1 and PTPN2. Post-translationally, monoubiquitinated and polyubiquitinated upon EGF stimulation; which does not affect tyrosine kinase activity or signaling capacity but may play a role in lysosomal targeting. Polyubiquitin linkage is mainly through 'Lys-63', but linkage through 'Lys-48', 'Lys-11' and 'Lys-29' also occurs. Deubiquitination by OTUD7B prevents degradation. Ubiquitinated by RNF115 and RNF126. Ubiquitinated by ZNRF1 or CBL at different lysines in response to EGF stimulation; leading to recruitment of the ESCRT machinery and subsequent degradation in the lysosomes. Deubiquitinated by UCHL1 leading to the inhibition of its degradation. Palmitoylated on Cys residues by ZDHHC20. Palmitoylation inhibits internalization after ligand binding, and increases the persistence of tyrosine-phosphorylated EGFR at the cell membrane. Palmitoylation increases the amplitude and duration of EGFR signaling. In terms of processing, methylated. Methylation at Arg-1199 by PRMT5 stimulates phosphorylation at Tyr-1197. As to expression, ubiquitously expressed. Isoform 2 is also expressed in ovarian cancers.

It is found in the cell membrane. Its subcellular location is the endoplasmic reticulum membrane. The protein localises to the golgi apparatus membrane. The protein resides in the nucleus membrane. It localises to the endosome. It is found in the endosome membrane. Its subcellular location is the nucleus. The protein localises to the secreted. The catalysed reaction is L-tyrosyl-[protein] + ATP = O-phospho-L-tyrosyl-[protein] + ADP + H(+). With respect to regulation, endocytosis and inhibition of the activated EGFR by phosphatases like PTPRJ and PTPRK constitute immediate regulatory mechanisms. Upon EGF-binding phosphorylates EPS15 that regulates EGFR endocytosis and activity. Moreover, inducible feedback inhibitors including LRIG1, SOCS4, SOCS5 and ERRFI1 constitute alternative regulatory mechanisms for the EGFR signaling. Up-regulated by NEU3-mediated desialylation of N-linked glycan at Asn-528. Receptor tyrosine kinase binding ligands of the EGF family and activating several signaling cascades to convert extracellular cues into appropriate cellular responses. Known ligands include EGF, TGFA/TGF-alpha, AREG, epigen/EPGN, BTC/betacellulin, epiregulin/EREG and HBEGF/heparin-binding EGF. Ligand binding triggers receptor homo- and/or heterodimerization and autophosphorylation on key cytoplasmic residues. The phosphorylated receptor recruits adapter proteins like GRB2 which in turn activates complex downstream signaling cascades. Activates at least 4 major downstream signaling cascades including the RAS-RAF-MEK-ERK, PI3 kinase-AKT, PLCgamma-PKC and STATs modules. May also activate the NF-kappa-B signaling cascade. Also directly phosphorylates other proteins like RGS16, activating its GTPase activity and probably coupling the EGF receptor signaling to the G protein-coupled receptor signaling. Also phosphorylates MUC1 and increases its interaction with SRC and CTNNB1/beta-catenin. Positively regulates cell migration via interaction with CCDC88A/GIV which retains EGFR at the cell membrane following ligand stimulation, promoting EGFR signaling which triggers cell migration. Plays a role in enhancing learning and memory performance. Plays a role in mammalian pain signaling (long-lasting hypersensitivity). In terms of biological role, isoform 2 may act as an antagonist of EGF action. Functionally, (Microbial infection) Acts as a receptor for hepatitis C virus (HCV) in hepatocytes and facilitates its cell entry. Mediates HCV entry by promoting the formation of the CD81-CLDN1 receptor complexes that are essential for HCV entry and by enhancing membrane fusion of cells expressing HCV envelope glycoproteins. This is Epidermal growth factor receptor from Homo sapiens (Human).